The primary structure comprises 356 residues: Competence protein ComGA (356 aa).

144-151 (GPTGSGKT) serves as a coordination point for ATP.

Belongs to the GSP E family.

It is found in the cell membrane. Required for uptake of DNA by competent cells. The polypeptide is Competence protein ComGA (comGA) (Bacillus subtilis (strain 168)).